The sequence spans 120 residues: Putative iron-sulfur cluster insertion protein ErpA (120 aa).

Iron-sulfur cluster-binding residues include Cys-49, Cys-113, and Cys-115.

Belongs to the HesB/IscA family. In terms of assembly, homodimer. The cofactor is iron-sulfur cluster.

Its function is as follows. Required for insertion of 4Fe-4S clusters. In Albidiferax ferrireducens (strain ATCC BAA-621 / DSM 15236 / T118) (Rhodoferax ferrireducens), this protein is Putative iron-sulfur cluster insertion protein ErpA.